Consider the following 568-residue polypeptide: Arginine--tRNA ligase (568 aa).

Positions 129 to 139 (ANPTGPLHIGH) match the 'HIGH' region motif.

It belongs to the class-I aminoacyl-tRNA synthetase family. In terms of assembly, monomer.

It is found in the cytoplasm. It carries out the reaction tRNA(Arg) + L-arginine + ATP = L-arginyl-tRNA(Arg) + AMP + diphosphate. This chain is Arginine--tRNA ligase, found in Wolbachia pipientis wMel.